The chain runs to 75 residues: Beta-defensin 30 (75 aa).

The signal sequence occupies residues 1–22; sequence MGSLQLILVLFVLLSDVPPVRS. Intrachain disulfides connect C35–C62, C42–C56, and C46–C63.

This sequence belongs to the beta-defensin family.

It localises to the secreted. In terms of biological role, has antibacterial activity. This Rattus norvegicus (Rat) protein is Beta-defensin 30 (Defb30).